A 305-amino-acid polypeptide reads, in one-letter code: Mitochondrial citrate transporter D (305 aa).

Solcar repeat units follow at residues 10-101 (LPFG…WGAF), 111-197 (QTQS…VRAQ), and 211-298 (RNDL…VMDF). A run of 6 helical transmembrane segments spans residues 16–36 (FIAG…LDVV), 78–98 (SAPI…NDSW), 118–137 (LTGA…FELV), 176–196 (TLWR…QVRA), 208–228 (QQTR…TILN), and 270–291 (LYKG…LLVV).

This sequence belongs to the mitochondrial carrier (TC 2.A.29) family.

It localises to the mitochondrion inner membrane. The enzyme catalyses citrate(in) + H(+)(in) = citrate(out) + H(+)(out). Mitochondrial transporter that mediates citrate export from mitochondria to cytoplasm. Both ctpA, ctpB, and ctpD play important roles in citric acid transport across the mitochondrial membrane and function in a redundant manner. The protein is Mitochondrial citrate transporter D of Aspergillus niger (strain ATCC 1015 / CBS 113.46 / FGSC A1144 / LSHB Ac4 / NCTC 3858a / NRRL 328 / USDA 3528.7).